The chain runs to 676 residues: Double-stranded RNA-specific editase Adar (676 aa).

A disordered region spans residues 1–51 (MKFDSRVMLNSANNNSPQHPVSAPSDINMNGYNRKLPQKRGYEMPKYSDPK). The span at 8-31 (MLNSANNNSPQHPVSAPSDINMNG) shows a compositional bias: polar residues. Residues 40 to 51 (RGYEMPKYSDPK) are compositionally biased toward basic and acidic residues. 2 consecutive DRBM domains span residues 61–127 (QPKN…SFIQ) and 197–272 (ITVD…SLCN). In terms of domain architecture, A to I editase spans 348–672 (SVSTGTKCVS…LKKPIEQDEF (325 aa)). His372 contributes to the Zn(2+) binding site. Glu374 functions as the Proton donor in the catalytic mechanism. The Zn(2+) site is built by Cys430 and Cys493.

Expressed in embryonic nervous system; late stage 13 sees ventral nerve cord expression which spreads to brain by stage 16. Expression is maintained through to adulthood.

Its function is as follows. Has A-to-I RNA editing activity on extended dsRNA: edits RNA-binding protein Rnp4F. A-to-I editing of pre-mRNAs acts predominantly through nervous system targets to affect adult nervous system integrity, function and behavior. Essential for adaptation to environmental stresses, such as oxygen deprivation, and for the prevention of premature neuronal degeneration, through the editing of ion channels as targets. This Drosophila melanogaster (Fruit fly) protein is Double-stranded RNA-specific editase Adar.